Consider the following 275-residue polypeptide: NH(3)-dependent NAD(+) synthetase (275 aa).

50-57 (GISGGVDS) serves as a coordination point for ATP. Residue aspartate 56 coordinates Mg(2+). Arginine 147 lines the deamido-NAD(+) pocket. Threonine 167 provides a ligand contact to ATP. Glutamate 172 is a Mg(2+) binding site. Deamido-NAD(+)-binding residues include lysine 180 and aspartate 187. 2 residues coordinate ATP: lysine 196 and threonine 218. 267-268 (HK) provides a ligand contact to deamido-NAD(+).

This sequence belongs to the NAD synthetase family. As to quaternary structure, homodimer.

The enzyme catalyses deamido-NAD(+) + NH4(+) + ATP = AMP + diphosphate + NAD(+) + H(+). The protein operates within cofactor biosynthesis; NAD(+) biosynthesis; NAD(+) from deamido-NAD(+) (ammonia route): step 1/1. Its function is as follows. Catalyzes the ATP-dependent amidation of deamido-NAD to form NAD. Uses ammonia as a nitrogen source. The protein is NH(3)-dependent NAD(+) synthetase of Pseudomonas savastanoi pv. phaseolicola (strain 1448A / Race 6) (Pseudomonas syringae pv. phaseolicola (strain 1448A / Race 6)).